Reading from the N-terminus, the 340-residue chain is Ferrochelatase (340 aa).

Positions 202 and 283 each coordinate Fe cation.

It belongs to the ferrochelatase family.

Its subcellular location is the cytoplasm. It catalyses the reaction heme b + 2 H(+) = protoporphyrin IX + Fe(2+). It functions in the pathway porphyrin-containing compound metabolism; protoheme biosynthesis; protoheme from protoporphyrin-IX: step 1/1. Catalyzes the ferrous insertion into protoporphyrin IX. This is Ferrochelatase from Acinetobacter baylyi (strain ATCC 33305 / BD413 / ADP1).